The sequence spans 119 residues: uncharacterized protein (119 aa).

Cys-13 is an active-site residue.

It belongs to the ArsC family.

This is an uncharacterized protein from Escherichia coli (strain K12).